The primary structure comprises 787 residues: Endonuclease MutS2 (787 aa).

336-343 contacts ATP; that stretch reads GPNTGGKT. The region spanning 712–787 is the Smr domain; it reads LDLRGVRYED…GNGATEVQFK (76 aa).

It belongs to the DNA mismatch repair MutS family. MutS2 subfamily. As to quaternary structure, homodimer. Binds to stalled ribosomes, contacting rRNA.

Endonuclease that is involved in the suppression of homologous recombination and thus may have a key role in the control of bacterial genetic diversity. In terms of biological role, acts as a ribosome collision sensor, splitting the ribosome into its 2 subunits. Detects stalled/collided 70S ribosomes which it binds and splits by an ATP-hydrolysis driven conformational change. Acts upstream of the ribosome quality control system (RQC), a ribosome-associated complex that mediates the extraction of incompletely synthesized nascent chains from stalled ribosomes and their subsequent degradation. Probably generates substrates for RQC. This chain is Endonuclease MutS2, found in Lactiplantibacillus plantarum (strain ATCC BAA-793 / NCIMB 8826 / WCFS1) (Lactobacillus plantarum).